The primary structure comprises 114 residues: Histone H3-6 (114 aa).

Basic residues predominate over residues 1–17 (NTGGKAPRKHIAHKQAK). A disordered region spans residues 1-32 (NTGGKAPRKHIAHKQAKKSSAAAATGGVKKPH). Residues 18–28 (KSSAAAATGGV) are compositionally biased toward low complexity.

It belongs to the histone H3 family. In terms of assembly, the nucleosome is a histone octamer containing two molecules each of H2A, H2B, H3 and H4 assembled in one H3-H4 heterotetramer and two H2A-H2B heterodimers. The octamer wraps approximately 147 bp of DNA.

It is found in the nucleus. The protein localises to the chromosome. Core component of nucleosome. Nucleosomes wrap and compact DNA into chromatin, limiting DNA accessibility to the cellular machineries which require DNA as a template. Histones thereby play a central role in transcription regulation, DNA repair, DNA replication and chromosomal stability. DNA accessibility is regulated via a complex set of post-translational modifications of histones, also called histone code, and nucleosome remodeling. This is Histone H3-6 (H3-6) from Stylonychia lemnae (Ciliate).